The following is a 327-amino-acid chain: Type II methyltransferase M.HhaI (327 aa).

The SAM-dependent MTase C5-type domain maps to 12–325 (LRFIDLFAGL…YNIGSSLNFK (314 aa)). Residue C81 is part of the active site.

It belongs to the class I-like SAM-binding methyltransferase superfamily. C5-methyltransferase family. Monomer.

The enzyme catalyses a 2'-deoxycytidine in DNA + S-adenosyl-L-methionine = a 5-methyl-2'-deoxycytidine in DNA + S-adenosyl-L-homocysteine + H(+). A methylase, recognizes the double-stranded sequence 5'-GCGC-3', methylates C-2 on both strands, and protects the DNA from cleavage by the HhaI endonuclease. This chain is Type II methyltransferase M.HhaI (hhaIM), found in Haemophilus parahaemolyticus.